The following is a 441-amino-acid chain: Phosphoribosylamine--glycine ligase (441 aa).

Residues 112–319 (RNFMKKYGIE…FTEIMSAVVK (208 aa)) form the ATP-grasp domain. 139-196 (IEKLGDVAVKPSGLTGGKGVKVMGDQLPDLKAAKDYTSELLEKGPVVIEERFIGEEFT) lines the ATP pocket. Positions 277, 289, and 291 each coordinate Mg(2+). Mn(2+) contacts are provided by Q277, E289, and N291.

It belongs to the GARS family. It depends on Mg(2+) as a cofactor. Requires Mn(2+) as cofactor.

The catalysed reaction is 5-phospho-beta-D-ribosylamine + glycine + ATP = N(1)-(5-phospho-beta-D-ribosyl)glycinamide + ADP + phosphate + H(+). It participates in purine metabolism; IMP biosynthesis via de novo pathway; N(1)-(5-phospho-D-ribosyl)glycinamide from 5-phospho-alpha-D-ribose 1-diphosphate: step 2/2. The sequence is that of Phosphoribosylamine--glycine ligase from Methanosarcina acetivorans (strain ATCC 35395 / DSM 2834 / JCM 12185 / C2A).